A 529-amino-acid polypeptide reads, in one-letter code: Listeriolysin O (529 aa).

An N-terminal signal peptide occupies residues 1–24 (MKKIMLVFITLILISLPIAQQTEA). Residues 35-54 (SISSMAPPASPPASPKTPIE) are disordered. Beta stranded transmembrane passes span 214-227 (ESQLIAKFGTAFKA), 234-243 (VNFGAISEGK), 312-321 (STKVKAAFDA), and 329-341 (SGDVELTNIIKNS). The short motif at 483–493 (ECTGLAWEWWR) is the Conserved undecapeptide element. The short motif at 515 to 516 (TL) is the Cholesterol binding element.

This sequence belongs to the cholesterol-dependent cytolysin family. As to quaternary structure, homooligomeric pore complex of 35 to 50 subunits; when inserted in the host membrane.

It localises to the secreted. Its subcellular location is the host membrane. The protein localises to the host cell membrane. With respect to regulation, activity of listeriolysin O is regulated on multiple levels. It should be high in the phagosome, thereby allowing escape of the bacteria from the phagosomal compartment. Then, once inside the host cytosol, the activity must be controlled to prevent lysis of the host plasma membrane and loss of the intracellular environment. In terms of biological role, a cholesterol-dependent toxin that causes cytolysis by forming pores in cholesterol containing host membranes. After binding to target membranes, the protein undergoes a major conformation change, leading to its insertion in the host membrane and formation of an oligomeric pore complex. Cholesterol is required for binding to host membranes, membrane insertion and pore formation; cholesterol binding is mediated by a Thr-Leu pair in the C-terminus. Acts as a major virulence factor required for the escape of bacteria from phagosomal vacuoles and entry into the host cytosol. Can be reversibly inactivated by oxidation. In Listeria monocytogenes serotype 4a (strain HCC23), this protein is Listeriolysin O (hly).